A 343-amino-acid chain; its full sequence is MSKGLLLLWLVTELWWLYLTPAASEDTIIGFLGQPVTLPCHYLSWSQSRNSMCWGKGSCPNSKCNAELLRTDGTRIISRKSTKYTLLGKVQFGEVSLTISNTNRGDSGVYCCRIEVPGWFNDVKKNVRLELRRATTTKKPTTTTRPTTTPYVTTTTPELLPTTVMTTSVLPTTTPPQTLATTAFSTAVTTCPSTTPGSFSQETTKGSAFTTESETLPASNHSQRSMMTISTDIAVLRPTGSNPGILPSTSQLTTQKTTLTTSESLQKTTKSHQINSRQTILIIACCVGFVLMVLLFLAFLLRGKVTGANCLQRHKRPDNTEDSDSVLNDMSHGRDDEDGIFTL.

Residues 1–22 (MSKGLLLLWLVTELWWLYLTPA) form the signal peptide. The Ig-like V-type domain maps to 23–128 (ASEDTIIGFL…WFNDVKKNVR (106 aa)). Over 23–279 (ASEDTIIGFL…KSHQINSRQT (257 aa)) the chain is Extracellular. 3 cysteine pairs are disulfide-bonded: cysteine 40–cysteine 112, cysteine 53–cysteine 64, and cysteine 59–cysteine 111. Asparagine 220 carries N-linked (GlcNAc...) asparagine glycosylation. Residues 239 to 258 (TGSNPGILPSTSQLTTQKTT) form a disordered region. Over residues 248 to 258 (STSQLTTQKTT) the composition is skewed to low complexity. The helical transmembrane segment at 280-300 (ILIIACCVGFVLMVLLFLAFL) threads the bilayer. At 301–343 (LRGKVTGANCLQRHKRPDNTEDSDSVLNDMSHGRDDEDGIFTL) the chain is on the cytoplasmic side. Positions 313-343 (RHKRPDNTEDSDSVLNDMSHGRDDEDGIFTL) are disordered. Phosphoserine is present on residues serine 323, serine 325, and serine 331.

This sequence belongs to the immunoglobulin superfamily. TIM family. Homodimer. In terms of tissue distribution, predominantly expressed in lymphoid tissues, such as spleen, lymph nodes, and Peyer patches. Also expressed in fetal liver, salivary gland, and spleen stromal cells, predominantly in the marginal zone and to a lesser extent throughout the white pulp. Not expressed in bone marrow-derived cells. Expressed mainly by antigen presenting cells (APCs) in T- and B-cell areas, but not by T- or B-lymphocytes.

It localises to the membrane. In terms of biological role, phosphatidylserine receptor that plays different role in immune response including phagocytosis of apoptotic cells and T-cell regulation. Controls T-cell activation in a bimodal fashion, decreasing the activation of naive T-cells by inducing cell cycle arrest, while increasing proliferation of activated T-cells by activating AKT1 and ERK1/2 phosphorylations and subsequent signaling pathways. Also plays a role in efferocytosis which is the process by which apoptotic cells are removed by phagocytic cells. Mechanistically, promotes the engulfment of apoptotic cells or exogenous particles by securing them to phagocytes through direct binding to phosphatidylserine present on apoptotic cells, while other engulfment receptors such as MERTK efficiently recognize apoptotic cells and mediate their ingestion. Additionally, promotes autophagy process by suppressing NLRP3 inflammasome activity via activation of STK11/PRKAA1 pathway in a phosphatidylserine-dependent mechanism. The chain is T-cell immunoglobulin and mucin domain-containing protein 4 (Timd4) from Mus musculus (Mouse).